Here is a 1274-residue protein sequence, read N- to C-terminus: MKRRLDDQESPVYAAQQRRIPGSTEAFSHQHRVLAPAPPVYEAVSETMQSATGIQYSVAPNYQVSAVPQSSGSHGPAIAAVHSSHHHPTAVQPHGGQVVQSHAHPAPPVAPVQGQQQFQRLKVEDALSYLDQVKLQFGSQPQVYNDFLDIMKEFKSQSIDTPGVISRVSQLFKGHPDLIMGFNTFLPPGYKIEVQTNDMVNVTTPGQVHQIPTHGIQPQPQPPPQHPSQPSSQSAPTPAQPAPQPTAAKVSKPSQLQAHTPASQQTPPLPPYASPRSPPVQPHTPVTISLGTAPSLQNNQPVEFNHAINYVNKIKNRFQGQPDIYKAFLEILHTYQKEQRNAKEAGGNYTPALTEQEVYAQVARLFKNQEDLLSEFGQFLPDANSSVLLSKTTAEKVDSVRNDHGGTVKKPQLNNKPQRPSQNGCQIRRHSGTGATPPVKKKPKLMSLKESSMADASKHGVGTESLFFDKVRKALRSAEAYENFLRCLVIFNQEVISRAELVQLVSPFLGKFPELFNWFKNFLGYKESVHLESFPKERATEGIAMEIDYASCKRLGSSYRALPKSYQQPKCTGRTPLCKEVLNDTWVSFPSWSEDSTFVSSKKTQYEEHIYRCEDERFELDVVLETNLATIRVLEAIQKKLSRLSAEEQAKFRLDNTLGGTSEVIHRKALQRIYADKAADIIDGLRKNPSIAVPIVLKRLKMKEEEWREAQRGFNKVWREQNEKYYLKSLDHQGINFKQNDTKVLRSKSLLNEIESIYDERQEQATEENAGVPVGPHLSLAYEDKQILEDAAALIIHHVKRQTGIQKEDKYKIKQIMHHFIPDLLFAQRGDLSDVEEEEEEEMDVDEATGAPKKHNGVGGSPPKSKLLFSNTAAQKLRGMDEVYNLFYVNNNWYIFMRLHQILCLRLLRICSQAERQIEEENREREWEREVLGIKRDKSDSPAIQLRLKEPMDVDVEDYYPAFLDMVRSLLDGNIDSSQYEDSLREMFTIHAYIAFTMDKLIQSIVRQLQHIVSDEVCVQVTDLYLAENNNGATGGQLNSQTSRSLLESAYQRKAEQLMSDENCFKLMFIQSQGQVQLTVELLDTEEENSDDPVEAERWSDYVERYMSSDTTSPELREHLAQKPVFLPRNLRRIRKCQRGREQQEKEGKEGNSKKTMENVESLDKLECRFKLNSYKMVYVIKSEDYMYRRTALLRAHQSHERVSKRLHQRFQAWVDKWTKEHVPREMAAETSKWLMGEGLEGLVPCTTTCDTETLHFVSINKYRVKYGTVFKAP.

Disordered stretches follow at residues methionine 1–alanine 26 and histidine 85–alanine 110. Serine 10 carries the phosphoserine modification. The 71-residue stretch at glutamine 119–glycine 189 folds into the PAH 1 domain. Residues glutamine 119–threonine 196 are interaction with HCFC1. Glycyl lysine isopeptide (Lys-Gly) (interchain with G-Cter in SUMO2) cross-links involve residues lysine 122 and lysine 134. The segment at proline 205–glutamine 297 is disordered. Residues proline 205 to glutamate 479 are interaction with REST. Low complexity predominate over residues serine 228–threonine 237. Residues lysine 252 to threonine 266 show a composition bias toward polar residues. The segment covering proline 267–proline 282 has biased composition (pro residues). Position 277 is a phosphoserine (serine 277). Residue threonine 284 is modified to Phosphothreonine. The span at threonine 284–glutamine 297 shows a compositional bias: polar residues. The region spanning glutamine 300–alanine 383 is the PAH 2 domain. A disordered region spans residues aspartate 398 to proline 443. The span at glutamine 412–cysteine 425 shows a compositional bias: polar residues. Residues serine 457–lysine 526 enclose the PAH 3 domain. The tract at residues histidine 459–lysine 526 is interaction with SAP30. Lysine 470 bears the N6-acetyllysine mark. The interval glycine 524–alanine 851 is interaction with NCOR1. Positions tyrosine 525–glycine 660 are interactions with SUDS3 and SAP130. Lysine 564 participates in a covalent cross-link: Glycyl lysine isopeptide (Lys-Gly) (interchain with G-Cter in SUMO2). The tract at residues asparagine 688–glycine 830 is interactions with HDAC1 and ARID4B. Phosphoserine is present on serine 833. Over residues valine 835–glutamate 847 the composition is skewed to acidic residues. A disordered region spans residues valine 835–serine 865. At serine 861 the chain carries Phosphoserine. N6-acetyllysine occurs at positions 866 and 876. Residues valine 889–arginine 968 form an interaction with OGT region. Residues cysteine 904 to glycine 933 are a coiled coil. Residues serine 941, serine 1090, and serine 1113 each carry the phosphoserine modification. The segment at cysteine 1137–methionine 1157 is disordered. The span at arginine 1139–methionine 1157 shows a compositional bias: basic and acidic residues.

Interacts with ARID4B, BRMS1L, HCFC1, HDAC1, HDAC2, MXI1, SAP30L, SAP130, SFPQ and TOPORS. Interacts with OGT (via TPRs 1-6); the interaction mediates transcriptional repression in parallel with histone deacetylase. Interacts with BAZ2A, MXD1, MXD3, MXD4, MBD2, DACH1, NCOR1, NR4A2, REST, RLIM, SAP30, SETDB1, SMYD2, and SUDS3. Interacts with PHF12 in a complex composed of HDAC1, PHF12 and SAP30. Interacts with TET1; the interaction recruits SIN3A to gene promoters. The large PER complex involved in the histone deacetylation is composed of at least HDAC1, PER2, SFPQ and SIN3A. Interacts with KLF11. Interacts with PPHLN1. Found in a complex with YY1, GON4L and HDAC1. Interacts (via PAH2) with FOXK1. Interacts with FOXK2. Found in a complex composed of at least SINHCAF, SIN3A, HDAC1, SAP30, RBBP4, OGT and TET1. Interacts with SINHCAF. Interacts with SPHK2. SUMO1 sumoylated by TOPORS. Probably desumoylated by SENP2. In terms of tissue distribution, widely expressed. Highest levels in testis, lung and thymus. Expressed at relatively high levels throughout brain development. In adult mice, expression is high in neurogenic regions such as the subventricular zone, rostral migratory stream, olfactory bulb and dentate gyrus.

It is found in the nucleus. The protein localises to the nucleolus. Its function is as follows. Acts as a transcriptional repressor. Corepressor for REST. Interacts with MXI1 to repress MYC responsive genes and antagonize MYC oncogenic activities. Also interacts with MXD1-MAX heterodimers to repress transcription by tethering SIN3A to DNA. Acts cooperatively with OGT to repress transcription in parallel with histone deacetylation. Involved in the control of the circadian rhythms. Required for the transcriptional repression of circadian target genes, such as PER1, mediated by the large PER complex through histone deacetylation. Cooperates with FOXK1 to regulate cell cycle progression probably by repressing cell cycle inhibitor genes expression. Required for cortical neuron differentiation and callosal axon elongation. This Mus musculus (Mouse) protein is Paired amphipathic helix protein Sin3a (Sin3a).